A 136-amino-acid polypeptide reads, in one-letter code: MSIKQMPGRVLISLLLSVTGLLSGCASHNENASLLAKKQAQNISQNLPIKSAGYTLVLAQSSGTTVKMTIISEAGTQTTQTPDAFLTSYQRQMCADPTVKLMLTEGINYSITINDTRTGNQYQRKLDRTTCGIVKA.

Positions 1-24 (MSIKQMPGRVLISLLLSVTGLLSG) are cleaved as a signal peptide. The N-palmitoyl cysteine moiety is linked to residue Cys25. Cys25 is lipidated: S-diacylglycerol cysteine. Cys94 and Cys131 form a disulfide bridge.

This sequence belongs to the GspS/AspS pilotin family. In terms of assembly, cryo-electron microscopy shows that the complex forms a cylindrical channel with 15 GspD2 subunits, each of which interacts with its surrounding AspS2 (GspS-beta).

The protein localises to the cell outer membrane. In terms of biological role, part of a type II secretion system (T2SS, formerly general secretion pathway, GSP) for the export of folded proteins across the outer membrane. Required for correct assembly of the type II secretion system-beta (T2SS-beta), for localization of GspD-beta to the cell outer membrane and for export of a labile enterotoxin by T2SS-beta. Each AspS2 binds to 2 GspD2 subunits and may clamp the monomers together, stabilizing structure and accelerating its assembly. The sequence is that of Pilotin AspS 2 from Escherichia coli O78:H11 (strain H10407 / ETEC).